A 291-amino-acid chain; its full sequence is 4-diphosphocytidyl-2-C-methyl-D-erythritol kinase (291 aa).

Residue K21 is part of the active site. 104 to 114 (PMGGGLGGGSS) is a binding site for ATP. D146 is a catalytic residue.

Belongs to the GHMP kinase family. IspE subfamily.

The catalysed reaction is 4-CDP-2-C-methyl-D-erythritol + ATP = 4-CDP-2-C-methyl-D-erythritol 2-phosphate + ADP + H(+). It participates in isoprenoid biosynthesis; isopentenyl diphosphate biosynthesis via DXP pathway; isopentenyl diphosphate from 1-deoxy-D-xylulose 5-phosphate: step 3/6. Functionally, catalyzes the phosphorylation of the position 2 hydroxy group of 4-diphosphocytidyl-2C-methyl-D-erythritol. This is 4-diphosphocytidyl-2-C-methyl-D-erythritol kinase from Methylococcus capsulatus (strain ATCC 33009 / NCIMB 11132 / Bath).